We begin with the raw amino-acid sequence, 154 residues long: Protein X (154 aa).

Residues 68-117 (PCALRFTSARRMETTVNAHQILPKVLHKRTLGLPAMSTTDLEAYFKDCVF) form a mitochondrial targeting sequence region.

Belongs to the orthohepadnavirus protein X family. As to quaternary structure, may form homodimer. May interact with host CEBPA, CFLAR, CREB1, DDB1, E4F1, HBXIP, HSPD1/HSP60, NFKBIA, POLR2E and SMAD4. Interacts with host SMC5-SMC6 complex and induces its degradation. Interacts with host TRPC4AP; leading to prevent ubiquitination of TRPC4AP. Interacts with host PLSCR1; this interaction promotes ubiquitination and degradation of HBx and impairs HBx-mediated cell proliferation. In terms of processing, a fraction may be phosphorylated in insect cells and HepG2 cells, a human hepatoblastoma cell line. Phosphorylated in vitro by host protein kinase C or mitogen-activated protein kinase. N-acetylated in insect cells.

It localises to the host cytoplasm. The protein resides in the host nucleus. It is found in the host mitochondrion. Functionally, multifunctional protein that plays a role in silencing host antiviral defenses and promoting viral transcription. Does not seem to be essential for HBV infection. May be directly involved in development of cirrhosis and liver cancer (hepatocellular carcinoma). Most of cytosolic activities involve modulation of cytosolic calcium. The effect on apoptosis is controversial depending on the cell types in which the studies have been conducted. May induce apoptosis by localizing in mitochondria and causing loss of mitochondrial membrane potential. May also modulate apoptosis by binding host CFLAR, a key regulator of the death-inducing signaling complex (DISC). Promotes viral transcription by using the host E3 ubiquitin ligase DDB1 to target the SMC5-SMC6 complex to proteasomal degradation. This host complex would otherwise bind to viral episomal DNA, and prevents its transcription. Moderately stimulates transcription of many different viral and cellular transcription elements. Promoters and enhancers stimulated by HBx contain DNA binding sites for NF-kappa-B, AP-1, AP-2, c-EBP, ATF/CREB, or the calcium-activated factor NF-AT. This Homo sapiens (Human) protein is Protein X.